A 167-amino-acid chain; its full sequence is Large ribosomal subunit protein uL10 (167 aa).

This sequence belongs to the universal ribosomal protein uL10 family. As to quaternary structure, part of the ribosomal stalk of the 50S ribosomal subunit. The N-terminus interacts with L11 and the large rRNA to form the base of the stalk. The C-terminus forms an elongated spine to which L12 dimers bind in a sequential fashion forming a multimeric L10(L12)X complex.

In terms of biological role, forms part of the ribosomal stalk, playing a central role in the interaction of the ribosome with GTP-bound translation factors. The polypeptide is Large ribosomal subunit protein uL10 (Latilactobacillus sakei subsp. sakei (strain 23K) (Lactobacillus sakei subsp. sakei)).